The sequence spans 364 residues: Alanine racemase (364 aa).

Lysine 34 serves as the catalytic Proton acceptor; specific for D-alanine. The residue at position 34 (lysine 34) is an N6-(pyridoxal phosphate)lysine. Substrate is bound at residue arginine 129. The active-site Proton acceptor; specific for L-alanine is tyrosine 259. Position 307 (methionine 307) interacts with substrate.

This sequence belongs to the alanine racemase family. Pyridoxal 5'-phosphate serves as cofactor.

It catalyses the reaction L-alanine = D-alanine. The protein operates within amino-acid biosynthesis; D-alanine biosynthesis; D-alanine from L-alanine: step 1/1. Catalyzes the interconversion of L-alanine and D-alanine. May also act on other amino acids. This Coxiella burnetii (strain Dugway 5J108-111) protein is Alanine racemase (alr).